The following is a 299-amino-acid chain: Protoheme IX farnesyltransferase (299 aa).

9 consecutive transmembrane segments (helical) span residues 29 to 49, 51 to 71, 100 to 120, 123 to 143, 150 to 170, 177 to 197, 223 to 243, 244 to 264, and 275 to 295; these read VVTLMLLTVLVGMCLALPGAV, LQPLIAGMLGIAMMAGAAAAM, HAATFAALLALLGFACLYWLV, LTAWLTLASLLGYAVVYTAYL, NIVIGGLAGAMPPLLGWTAVT, GLLLVIIIFAWTPPHFWALAI, CIFLYTILLALACLLPVLVGM, SGALYLLGSTLLSIGFIYKAW, and AMDVFRFSIYHLMLLFILLLV.

It belongs to the UbiA prenyltransferase family. Protoheme IX farnesyltransferase subfamily.

Its subcellular location is the cell inner membrane. It catalyses the reaction heme b + (2E,6E)-farnesyl diphosphate + H2O = Fe(II)-heme o + diphosphate. Its pathway is porphyrin-containing compound metabolism; heme O biosynthesis; heme O from protoheme: step 1/1. Its function is as follows. Converts heme B (protoheme IX) to heme O by substitution of the vinyl group on carbon 2 of heme B porphyrin ring with a hydroxyethyl farnesyl side group. This Shewanella amazonensis (strain ATCC BAA-1098 / SB2B) protein is Protoheme IX farnesyltransferase.